The primary structure comprises 643 residues: Threonine--tRNA ligase (643 aa).

A TGS domain is found at 1-61; the sequence is MIKVSLKDGS…NEDVSLSICT (61 aa). The segment at 240-540 is catalytic; it reads DHNKLGRELK…LIEKYAGAFP (301 aa). Zn(2+) contacts are provided by cysteine 335, histidine 386, and histidine 517.

It belongs to the class-II aminoacyl-tRNA synthetase family. As to quaternary structure, homodimer. The cofactor is Zn(2+).

It is found in the cytoplasm. The enzyme catalyses tRNA(Thr) + L-threonine + ATP = L-threonyl-tRNA(Thr) + AMP + diphosphate + H(+). Catalyzes the attachment of threonine to tRNA(Thr) in a two-step reaction: L-threonine is first activated by ATP to form Thr-AMP and then transferred to the acceptor end of tRNA(Thr). Also edits incorrectly charged L-seryl-tRNA(Thr). The chain is Threonine--tRNA ligase from Clostridium botulinum (strain Alaska E43 / Type E3).